A 759-amino-acid polypeptide reads, in one-letter code: MSKRLRSSEVCADCSGPDPSWASVNRGTFLCDECCSVHRSLGRHISQVRHLKHTPWPPTLLQMVETLYNNGANSIWEHSLLDPASIMSGRRKANPQDKVHPNKAEFIRAKYQMLAFVHRLPCRDDDSVTAKDLSKQLHSSVRTGNLETCLRLLSLGAQANFFHPEKGNTPLHVASKAGQILQAELLAVYGADPGTQDSSGKTPVDYARQGGHHELAERLVEIQYELTDRLAFYLCGRKPDHKNGQHFIIPQMADSSLDLSELAKAAKKKLQSLSNHLFEELAMDVYDEVDRRETDAVWLATQNHSALVTETTVVPFLPVNPEYSSTRNQGRQKLARFNAHEFATLVIDILSDAKRRQQGSSLSGSKDNVELILKTINNQHSVESQDNDQPDYDSVASDEDTDLETTASKTNRQKSLDSDLSDGPVTVQEFMEVKNALVASEAKIQQLMKVNNNLSDELRIMQKKLQTLQSENSNLRKQATTNVYQVQTGSEYTDTSNHSSLKRRPSARGSRPMSMYETGSGQKPYLPMGEASRPEESRMRLQPFPAHIGRSALVTSSSSLPSFPSTLSWSRDESARRASRLEKQNSTPESDYDNTPNDMEPDGMGSSRKGRQRSMVWPGDGLVPDTAEPHVAPSPTLPSTEDVIRKTEQITKNIQELLRAAQENKHDSYIPCSERIHVAVTEMAALFPKKPKSDMVRTSLRLLTSSAYRLQSECKKTLPGDPGSPTDVQLVTQQVIQCAYDIAKAAKQLVTITTKENNN.

One can recognise an Arf-GAP domain in the interval 1-124 (MSKRLRSSEV…AFVHRLPCRD (124 aa)). The C4-type zinc finger occupies 11–34 (CADCSGPDPSWASVNRGTFLCDEC). 3 ANK repeats span residues 132–161 (DLSK…QANF), 166–195 (KGNT…DPGT), and 199–228 (SGKT…ELTD). Positions 379–422 (QHSVESQDNDQPDYDSVASDEDTDLETTASKTNRQKSLDSDLSD) are disordered. Acidic residues predominate over residues 385 to 403 (QDNDQPDYDSVASDEDTDL). Residues serine 394 and serine 397 each carry the phosphoserine modification. Phosphothreonine is present on threonine 401. 3 positions are modified to phosphoserine: serine 415, serine 418, and serine 421. Positions 437–478 (LVASEAKIQQLMKVNNNLSDELRIMQKKLQTLQSENSNLRKQ) form a coiled coil. Residues 480 to 499 (TTNVYQVQTGSEYTDTSNHS) are compositionally biased toward polar residues. Disordered regions lie at residues 480-538 (TTNV…EESR) and 554-643 (VTSS…TEDV). Tyrosine 484 carries the post-translational modification Phosphotyrosine. Low complexity predominate over residues 555 to 569 (TSSSSLPSFPSTLSW). 3 positions are modified to phosphoserine: serine 559, serine 562, and serine 570. Over residues 570–583 (SRDESARRASRLEK) the composition is skewed to basic and acidic residues. Residues 584 to 597 (QNSTPESDYDNTPN) show a composition bias toward polar residues. At threonine 587 the chain carries Phosphothreonine. Phosphoserine is present on serine 614.

As to quaternary structure, may form heterooligomers with GIT1. Directly interacts with protein Piccolo/PCLO. Interacts with PPFIA1 and PPFIA2. Interacts with ARHGEF7. Identified in a complex with ARHGEF6 and BIN2. Interacts with PAK3. Interacts with PXN/paxillin. Interacts with TGFB1I1. Forms a complex with EFNB1 and GRB4/NCK2.

Its function is as follows. GTPase-activating protein for ADP ribosylation factor family members, including ARF1. The sequence is that of ARF GTPase-activating protein GIT2 (GIT2) from Homo sapiens (Human).